Consider the following 170-residue polypeptide: Peptidyl-prolyl cis-trans isomerase-like 3 (170 aa).

The region spanning 1–160 (MSVTLHTDLG…QEFRIKSVTI (160 aa)) is the PPIase cyclophilin-type domain.

This sequence belongs to the cyclophilin-type PPIase family. PPIL3 subfamily.

The enzyme catalyses [protein]-peptidylproline (omega=180) = [protein]-peptidylproline (omega=0). In terms of biological role, PPIases accelerate the folding of proteins. It catalyzes the cis-trans isomerization of proline imidic peptide bonds in oligopeptides. The chain is Peptidyl-prolyl cis-trans isomerase-like 3 (cyp4) from Rhizopus delemar (strain RA 99-880 / ATCC MYA-4621 / FGSC 9543 / NRRL 43880) (Mucormycosis agent).